The following is a 477-amino-acid chain: MFPVFPCTLLAPPFPVLGLDSRGVGGLMNSFPPPQGHAQNPLQVGAELQSRFFASQGCAQSPFQAAPAPPPTPQAPAAEPLQVDLLPVLAAAQESAAAAAAAAAAAAAVVTAPPAPAAASTVDTAALKQPPAPPPPPPAVSAPAAEAAPPAAAATIAAAAATAVVAPTSTVAVAPVASVLEKKTKSKGPYICALCAKEFKNGYNLRRHEAIHTGAKAGRVPSGAMKMPTMVPLSLLSVPQLSGASGGGGEAGAGGGTTAVAAGGVVTTTASGKRIRKNHACEMCGKAFRDVYHLNRHKLSHSDEKPYQCPVCQQRFKRKDRMSYHVRSHDGAVHKPYNCSHCGKSFSRPDHLNSHVRQVHSTERPFKCEKCEAAFATKDRLRAHTVRHEEKVPCHVCGKMLSSAYISDHMKVHSQGPHHVCELCNKGTGEVCPMAAAAAAAAAAAAAVVAAPPTAVGSLSGAEGVPVSSQPLPSQPW.

Disordered regions lie at residues 59–78 (AQSPFQAAPAPPPTPQAPAA) and 121–144 (TVDTAALKQPPAPPPPPPAVSAPA). The span at 130–140 (PPAPPPPPPAV) shows a compositional bias: pro residues. 4 consecutive C2H2-type zinc fingers follow at residues 190–212 (YICALCAKEFKNGYNLRRHEAIH), 279–301 (HACEMCGKAFRDVYHLNRHKLSH), 307–329 (YQCPVCQQRFKRKDRMSYHVRSH), and 337–360 (YNCSHCGKSFSRPDHLNSHVRQVH). The residue at position 361 (S361) is a Phosphoserine. Residues 366–388 (FKCEKCEAAFATKDRLRAHTVRH) form a C2H2-type 5 zinc finger. The C2H2-type 6; atypical zinc-finger motif lies at 392-413 (VPCHVCGKMLSSAYISDHMKVH).

Interacts with BPTF. As to expression, expressed in Purkinje cells in the brain (at protein level).

The protein resides in the nucleus. Its function is as follows. Transcriptional regulator. Acts as a transcriptional activator that binds to purine-rich GAGA sites found in the promoter of many genes including insulin I and II and islet amyloid polypeptide. The sequence is that of Myc-associated zinc finger protein (Maz) from Mus musculus (Mouse).